The following is a 302-amino-acid chain: 4-diphosphocytidyl-2-C-methyl-D-erythritol kinase (302 aa).

Residue Lys-27 is part of the active site. 110-120 (PMGGGVGGGSS) provides a ligand contact to ATP. Residue Asp-152 is part of the active site.

Belongs to the GHMP kinase family. IspE subfamily.

It carries out the reaction 4-CDP-2-C-methyl-D-erythritol + ATP = 4-CDP-2-C-methyl-D-erythritol 2-phosphate + ADP + H(+). Its pathway is isoprenoid biosynthesis; isopentenyl diphosphate biosynthesis via DXP pathway; isopentenyl diphosphate from 1-deoxy-D-xylulose 5-phosphate: step 3/6. Its function is as follows. Catalyzes the phosphorylation of the position 2 hydroxy group of 4-diphosphocytidyl-2C-methyl-D-erythritol. In Mannheimia succiniciproducens (strain KCTC 0769BP / MBEL55E), this protein is 4-diphosphocytidyl-2-C-methyl-D-erythritol kinase.